The sequence spans 238 residues: Ribitol-5-phosphate cytidylyltransferase 2 (238 aa).

CTP contacts are provided by residues 7–10 (LAGG) and 81–87 (GTDRNET).

It belongs to the IspD/TarI cytidylyltransferase family. TarI subfamily.

The catalysed reaction is D-ribitol 5-phosphate + CTP + H(+) = CDP-L-ribitol + diphosphate. The protein operates within cell wall biogenesis; poly(ribitol phosphate) teichoic acid biosynthesis. Functionally, catalyzes the transfer of the cytidylyl group of CTP to D-ribitol 5-phosphate. This Staphylococcus aureus (strain bovine RF122 / ET3-1) protein is Ribitol-5-phosphate cytidylyltransferase 2.